Here is a 303-residue protein sequence, read N- to C-terminus: Histone deacetylase HDT2 (303 aa).

Residues 100–112 (EMDLDSEDEEEEL) are compositionally biased toward acidic residues. The segment at 100-282 (EMDLDSEDEE…SGGSVPCKSC (183 aa)) is disordered. Basic and acidic residues predominate over residues 119-133 (ENGKADGKEEQKNQE). A compositionally biased stretch (acidic residues) spans 154 to 203 (DSDDSDEDESDDSDEDDSDDSDEGEGLSPDEGDDDSSDEDDTSDDDEEET). A compositionally biased stretch (basic and acidic residues) spans 204 to 217 (PTPKKPEAGKKRGA). Residues 277-300 (VPCKSCSKTFNSEMALQAHSKAKH) form a C2H2-type zinc finger.

The protein belongs to the histone deacetylase HD2 family. Multimer. Possibly forms a homotrimer with HDT1 and/or HDT3.

It localises to the nucleus. The protein resides in the nucleolus. Functionally, mediates the deacetylation of lysine residues on the N-terminal part of the core histones (H2A, H2B, H3 and H4). Histone deacetylation gives a tag for epigenetic repression and plays an important role in transcriptional regulation, cell cycle progression and developmental events. This is Histone deacetylase HDT2 (HDT2) from Zea mays (Maize).